The following is a 303-amino-acid chain: Beta-lactamase L2 (303 aa).

Residues 1–35 constitute a signal peptide (tat-type signal); that stretch reads MLARRRFLQFSGAAVASSLALPLLARAAGKTAASA. The active-site Acyl-ester intermediate is Ser83. 247–249 provides a ligand contact to substrate; it reads KTG.

It belongs to the class-A beta-lactamase family. Post-translationally, predicted to be exported by the Tat system. The position of the signal peptide cleavage has not been experimentally proven.

The enzyme catalyses a beta-lactam + H2O = a substituted beta-amino acid. The protein is Beta-lactamase L2 of Stenotrophomonas maltophilia (Pseudomonas maltophilia).